Here is a 360-residue protein sequence, read N- to C-terminus: MTAKTPLHTTHLACGAKMVDFHGWDMPLHYGSQLNEHHAVRNDAGMFDVSHMTIVDILGAGGRQFLRKLLTNDVDQITHNGKALYSCMCNEHGGIIDDLIVYQRASDNYRVVLNSATRQNDVAWIRAKSEGFAVGLQERRELSMLAVQGPNAIAKTLSILAPAHVDAVSTLTSFECVDVDHWFFARTGYTGEDGLEIIVPNEFVTQLWNDLLNAGVTPCGLGARDTLRLEAGMLLYGQDMDETTTPLESGLAWTVKWEPEDRGFIGMGALASQKQQGIKRKMVGLTLLDKGIMRHGQKVIIEGCPDGIITSGSYSPTLQQSIALARVPVETGEQVLVDIRGKLIPAKVGKPRFIKQGKPV.

This sequence belongs to the GcvT family. In terms of assembly, the glycine cleavage system is composed of four proteins: P, T, L and H.

It carries out the reaction N(6)-[(R)-S(8)-aminomethyldihydrolipoyl]-L-lysyl-[protein] + (6S)-5,6,7,8-tetrahydrofolate = N(6)-[(R)-dihydrolipoyl]-L-lysyl-[protein] + (6R)-5,10-methylene-5,6,7,8-tetrahydrofolate + NH4(+). The glycine cleavage system catalyzes the degradation of glycine. The chain is Aminomethyltransferase from Legionella pneumophila (strain Paris).